Reading from the N-terminus, the 401-residue chain is Arylacetamide deacetylase-like 2 (401 aa).

An N-terminal signal peptide occupies residues 1–18; sequence MGLKALCLGLLCVLFVSH. An Involved in the stabilization of the negatively charged intermediate by the formation of the oxyanion hole motif is present at residues 111 to 113; the sequence is HGG. Cysteine 116 and cysteine 338 are oxidised to a cystine. Residues serine 189, aspartate 341, and histidine 371 contribute to the active site.

This sequence belongs to the 'GDXG' lipolytic enzyme family.

The protein resides in the secreted. In Homo sapiens (Human), this protein is Arylacetamide deacetylase-like 2 (AADACL2).